The chain runs to 493 residues: Dipeptide permease D (493 aa).

The next 13 helical transmembrane spans lie at 14–34 (VVAL…LLIL), 49–69 (ELFS…GYLA), 91–111 (LVLG…AIIV), 138–158 (GGFS…PIAC), 167–187 (WAMG…IFLC), 212–232 (NWGW…VLFW), 235–255 (WSVY…AKIY), 267–287 (LGLI…AQQG), 312–332 (MFQS…AWLV), 344–364 (IWGK…ILTL), 379–399 (LMVL…PVAM), 413–433 (VLTG…AGVI), and 458–478 (VFEQ…LIWL).

It belongs to the major facilitator superfamily. Proton-dependent oligopeptide transporter (POT/PTR) (TC 2.A.17) family. DtpD subfamily.

It is found in the cell inner membrane. Probable proton-dependent permease that transports dipeptides. This chain is Dipeptide permease D, found in Salmonella choleraesuis (strain SC-B67).